Reading from the N-terminus, the 332-residue chain is Holliday junction branch migration complex subunit RuvB (332 aa).

The large ATPase domain (RuvB-L) stretch occupies residues 1-181 (MARILDNDVM…FGITGHMEYY (181 aa)). ATP contacts are provided by residues Leu-20, Arg-21, Gly-62, Lys-65, Thr-66, Thr-67, 128-130 (EDF), Arg-171, Tyr-181, and Arg-218. Residue Thr-66 coordinates Mg(2+). A small ATPAse domain (RuvB-S) region spans residues 182 to 252 (QEKDLTEIVE…ITDRALTMLD (71 aa)). Residues 255–332 (REGLDYIDQK…RHLGYPYQNT (78 aa)) form a head domain (RuvB-H) region. DNA-binding residues include Arg-291, Arg-310, Arg-312, and Arg-315.

The protein belongs to the RuvB family. Homohexamer. Forms an RuvA(8)-RuvB(12)-Holliday junction (HJ) complex. HJ DNA is sandwiched between 2 RuvA tetramers; dsDNA enters through RuvA and exits via RuvB. An RuvB hexamer assembles on each DNA strand where it exits the tetramer. Each RuvB hexamer is contacted by two RuvA subunits (via domain III) on 2 adjacent RuvB subunits; this complex drives branch migration. In the full resolvosome a probable DNA-RuvA(4)-RuvB(12)-RuvC(2) complex forms which resolves the HJ.

Its subcellular location is the cytoplasm. It carries out the reaction ATP + H2O = ADP + phosphate + H(+). The RuvA-RuvB-RuvC complex processes Holliday junction (HJ) DNA during genetic recombination and DNA repair, while the RuvA-RuvB complex plays an important role in the rescue of blocked DNA replication forks via replication fork reversal (RFR). RuvA specifically binds to HJ cruciform DNA, conferring on it an open structure. The RuvB hexamer acts as an ATP-dependent pump, pulling dsDNA into and through the RuvAB complex. RuvB forms 2 homohexamers on either side of HJ DNA bound by 1 or 2 RuvA tetramers; 4 subunits per hexamer contact DNA at a time. Coordinated motions by a converter formed by DNA-disengaged RuvB subunits stimulates ATP hydrolysis and nucleotide exchange. Immobilization of the converter enables RuvB to convert the ATP-contained energy into a lever motion, pulling 2 nucleotides of DNA out of the RuvA tetramer per ATP hydrolyzed, thus driving DNA branch migration. The RuvB motors rotate together with the DNA substrate, which together with the progressing nucleotide cycle form the mechanistic basis for DNA recombination by continuous HJ branch migration. Branch migration allows RuvC to scan DNA until it finds its consensus sequence, where it cleaves and resolves cruciform DNA. In Streptococcus pyogenes serotype M3 (strain ATCC BAA-595 / MGAS315), this protein is Holliday junction branch migration complex subunit RuvB.